The chain runs to 90 residues: Inactive casein kinase II subunit alpha-2 (90 aa).

Residues 40–48 (VGRGKYSEV) and Lys63 contribute to the ATP site.

It belongs to the protein kinase superfamily. Ser/Thr protein kinase family. CK2 subfamily.

Functionally, the Nipponbare allele of HD6 contains a premature stop codon, resulting in a truncated non-functional product. In Oryza sativa subsp. japonica (Rice), this protein is Inactive casein kinase II subunit alpha-2.